The sequence spans 339 residues: Ribosomal RNA small subunit methyltransferase C (339 aa).

The protein belongs to the methyltransferase superfamily. RsmC family. In terms of assembly, monomer.

Its subcellular location is the cytoplasm. It carries out the reaction guanosine(1207) in 16S rRNA + S-adenosyl-L-methionine = N(2)-methylguanosine(1207) in 16S rRNA + S-adenosyl-L-homocysteine + H(+). Specifically methylates the guanine in position 1207 of 16S rRNA in the 30S particle. This is Ribosomal RNA small subunit methyltransferase C from Aliivibrio salmonicida (strain LFI1238) (Vibrio salmonicida (strain LFI1238)).